The chain runs to 417 residues: Transmembrane protease serine 11D (417 aa).

The Cytoplasmic segment spans residues 1–17 (MYRPRSMVSPSRFFNPF). Residues 18 to 38 (MVALIVIITVGLLAMTAGLLI) traverse the membrane as a helical; Signal-anchor for type II membrane protein segment. The Extracellular segment spans residues 39-417 (HFLAFDKRAY…RNWIRQQTGI (379 aa)). An SEA domain is found at 46–162 (RAYFYHSNFH…SNGITSLTDQ (117 aa)). Cystine bridges form between C172-C291, C211-C227, C336-C352, and C363-C392. The region spanning 186 to 416 (IIGGTQAETG…YRNWIRQQTG (231 aa)) is the Peptidase S1 domain. Catalysis depends on charge relay system residues H226 and D271. The active-site Charge relay system is the S367.

Belongs to the peptidase S1 family. In terms of assembly, monomer. As to expression, isoform 1 and isoform 2 are expressed in the esophagus, tongue and trachea. Isoform 2 is also highly expressed in the adrenal cortex and heart.

It localises to the cell membrane. It is found in the secreted. In terms of biological role, may play some biological role in the host defense system on the mucous membrane independently of or in cooperation with other substances in airway mucous or bronchial secretions. Plays a role in the proteolytic processing of ACE2. Preferentially cleaves the C-terminal side of arginine residues at the P1 position of certain peptides. Isoform 2 may play a key role in regulating adrenal proliferation by specifically cleaving N-POMC. This chain is Transmembrane protease serine 11D (Tmprss11d), found in Rattus norvegicus (Rat).